A 407-amino-acid chain; its full sequence is DNA primase DnaG (407 aa).

Residues 172 to 248 enclose the Toprim domain; it reads DWIIVVEGRA…HIDYVARAPP (77 aa). Mg(2+) contacts are provided by Glu-178, Asp-222, and Asp-224. Positions 279–304 are disordered; the sequence is AGAEKTEAAAPPPQQPTAPPAAPSQQ. The segment covering 288-300 has biased composition (pro residues); that stretch reads APPPQQPTAPPAA.

This sequence belongs to the archaeal DnaG primase family. Forms a ternary complex with MCM helicase and DNA. Component of the archaeal exosome complex. Mg(2+) is required as a cofactor.

The enzyme catalyses ssDNA + n NTP = ssDNA/pppN(pN)n-1 hybrid + (n-1) diphosphate.. Functionally, RNA polymerase that catalyzes the synthesis of short RNA molecules used as primers for DNA polymerase during DNA replication. Also part of the exosome, which is a complex involved in RNA degradation. Acts as a poly(A)-binding protein that enhances the interaction between heteromeric, adenine-rich transcripts and the exosome. The sequence is that of DNA primase DnaG from Pyrobaculum calidifontis (strain DSM 21063 / JCM 11548 / VA1).